A 159-amino-acid polypeptide reads, in one-letter code: Large ribosomal subunit protein uL11 (159 aa).

Belongs to the universal ribosomal protein uL11 family. In terms of assembly, part of the ribosomal stalk of the 50S ribosomal subunit. Interacts with L10 and the large rRNA to form the base of the stalk. L10 forms an elongated spine to which L12 dimers bind in a sequential fashion forming a multimeric L10(L12)X complex.

Its function is as follows. Forms part of the ribosomal stalk which helps the ribosome interact with GTP-bound translation factors. In Methanococcus maripaludis (strain DSM 14266 / JCM 13030 / NBRC 101832 / S2 / LL), this protein is Large ribosomal subunit protein uL11.